Consider the following 259-residue polypeptide: Pimeloyl-[acyl-carrier protein] methyl ester esterase (259 aa).

Residues Trp-18, 78-79 (SL), and 139-143 (FLALD) contribute to the substrate site. Residue Ser-78 is the Nucleophile of the active site. Catalysis depends on residues Asp-203 and His-231. Substrate is bound at residue His-231.

The protein belongs to the AB hydrolase superfamily. Carboxylesterase BioH family. As to quaternary structure, monomer.

It is found in the cytoplasm. It catalyses the reaction 6-carboxyhexanoyl-[ACP] methyl ester + H2O = 6-carboxyhexanoyl-[ACP] + methanol + H(+). It participates in cofactor biosynthesis; biotin biosynthesis. Its function is as follows. The physiological role of BioH is to remove the methyl group introduced by BioC when the pimeloyl moiety is complete. It allows to synthesize pimeloyl-ACP via the fatty acid synthetic pathway through the hydrolysis of the ester bonds of pimeloyl-ACP esters. The chain is Pimeloyl-[acyl-carrier protein] methyl ester esterase from Stenotrophomonas maltophilia (strain K279a).